Consider the following 315-residue polypeptide: Probable cell division protein WhiA (315 aa).

Positions 280–313 form a DNA-binding region, H-T-H motif; sequence SLRELGKMLNPPVGKSGVNHRLRRIEKIADELKQ.

Belongs to the WhiA family.

In terms of biological role, involved in cell division and chromosome segregation. This chain is Probable cell division protein WhiA, found in Clostridium botulinum (strain ATCC 19397 / Type A).